We begin with the raw amino-acid sequence, 258 residues long: NAD kinase (258 aa).

The active-site Proton acceptor is the aspartate 51. NAD(+) contacts are provided by residues 51-52 (DG), 119-120 (ND), lysine 130, aspartate 149, 160-165 (TAYSLS), and alanine 184.

The protein belongs to the NAD kinase family. In terms of assembly, homodimer. Requires a divalent metal cation as cofactor.

Its subcellular location is the cytoplasm. It carries out the reaction NAD(+) + ATP = ADP + NADP(+) + H(+). In terms of biological role, involved in the regulation of the intracellular balance between NAD(H) and NADP(H), and is a key enzyme in the biosynthesis of NADP. Catalyzes specifically the phosphorylation on 2'-hydroxyl of the adenosine moiety of NAD to yield NADP. This is NAD kinase (NADK) from Thermotoga maritima (strain ATCC 43589 / DSM 3109 / JCM 10099 / NBRC 100826 / MSB8).